Consider the following 307-residue polypeptide: Dioxygenase swnH1 (307 aa).

Fe cation contacts are provided by histidine 149, aspartate 151, and histidine 227.

It belongs to the PhyH family. Homodimer. It depends on Fe cation as a cofactor.

It functions in the pathway mycotoxin biosynthesis. Dioxygenase; part of the gene cluster that mediates the biosynthesis of swainsonine (SW), a cytotoxic fungal alkaloid and a potential cancer therapy drug. Swainsonine production occurs via a multibranched pathway and is dispensable for fungal colonization of plants and infection of insect hosts. The first step of swainsonine biosynthesis is the production of the precursor pipecolic acid (PA) via conversion of L-lysine (Lys) to 1-piperideine-6-carboxylate (P6C) by the aminotransferase swnA, the latter being further reduced to PA by the reductase swnR. PA can be converted from lysine by both the SW biosynthetic cluster and the unclustered genes such as lysine cyclodeaminase. The PKS-NRPS hybrid synthetase swnK uptakes and condensates PA and malonyl-CoA with and without skipping of the ketoreductase (KR) domain in order to produce 3 intermediates, 1-oxoindolizidine, (1S)-1-hydroxyindolizin, and (1R)-1-hydroxyindolizine; with the transisomer (1S)-1-hydroxyindolizin being predominant. The terminal thioester reductase (TE) domain of swnK is involved in reduction of the thioester bond to release the intermediate aldehydes. The oxidoreductase swnN could contribute to the reduction of 1-oxoindolizidine to (1S)-1-hydroxyindolizin and (1R)-1-hydroxyindolizine, contributing to the major route of SW production. The dioxygenase swnH2 would be responsible for the oxidization of (1R)-1-hydroxyindolizine into (1R,2S)-1,2-dihydroxyindolizine and of (1S)-1-hydroxyindolizin to yield both (1R,2S)-1,2-dihydroxyindolizine and (1S,2S)-1,2-dihydroxyindolizine. The dioxygenase swnH1 then performs the conversion of the 1,2-dihydroxyindolizine epimers to SW. This is Dioxygenase swnH1 from Metarhizium robertsii (strain ARSEF 23 / ATCC MYA-3075) (Metarhizium anisopliae (strain ARSEF 23)).